A 123-amino-acid chain; its full sequence is Small ribosomal subunit protein uS12 (123 aa).

D89 carries the 3-methylthioaspartic acid modification.

This sequence belongs to the universal ribosomal protein uS12 family. In terms of assembly, part of the 30S ribosomal subunit. Contacts proteins S8 and S17. May interact with IF1 in the 30S initiation complex.

In terms of biological role, with S4 and S5 plays an important role in translational accuracy. Functionally, interacts with and stabilizes bases of the 16S rRNA that are involved in tRNA selection in the A site and with the mRNA backbone. Located at the interface of the 30S and 50S subunits, it traverses the body of the 30S subunit contacting proteins on the other side and probably holding the rRNA structure together. The combined cluster of proteins S8, S12 and S17 appears to hold together the shoulder and platform of the 30S subunit. This Rhizobium etli (strain ATCC 51251 / DSM 11541 / JCM 21823 / NBRC 15573 / CFN 42) protein is Small ribosomal subunit protein uS12.